Here is a 255-residue protein sequence, read N- to C-terminus: UPF0246 protein BVU_0413 (255 aa).

It belongs to the UPF0246 family.

The protein is UPF0246 protein BVU_0413 of Phocaeicola vulgatus (strain ATCC 8482 / DSM 1447 / JCM 5826 / CCUG 4940 / NBRC 14291 / NCTC 11154) (Bacteroides vulgatus).